The chain runs to 203 residues: CASP-like protein 2U6 (203 aa).

The Cytoplasmic segment spans residues 1–31 (MSEHRIPVAADKKISPPISAGEQKGCKGLKR). The helical transmembrane segment at 32-52 (TDLMLRFAAFVCCTVTMVVLI) threads the bilayer. At 53–84 (TDKQTSAIQVPGFNNLTITKTVSFDLAKAFVY) the chain is on the extracellular side. Asn67 is a glycosylation site (N-linked (GlcNAc...) asparagine). A helical membrane pass occupies residues 85–105 (LVSAAGIGAGYTLLVLVLSII). Topologically, residues 106-111 (SAERSK) are cytoplasmic. A helical membrane pass occupies residues 112-132 (AIAWFIFVFDQLITYVLLAAA). Topologically, residues 133-164 (AASTEVAYMGAHAPPEASWLKVCSLFGRFCHQ) are extracellular. Residues 165-185 (LGASLVTSLISTVLFAFSAAI) form a helical membrane-spanning segment. At 186 to 203 (SAYYLFSNTNVRPAYSKG) the chain is on the cytoplasmic side.

It belongs to the Casparian strip membrane proteins (CASP) family. In terms of assembly, homodimer and heterodimers.

It localises to the cell membrane. The polypeptide is CASP-like protein 2U6 (Selaginella moellendorffii (Spikemoss)).